Consider the following 264-residue polypeptide: MKQYLDLMNKVLAEGTPKADRTGTGTLSIFGHQMRFNLQEGFPLVTTKKCHLRSIIHELLWFLNGDTNVAYLKENKVSIWDEWADENGNLGPVYGKQWRAWGTADGRQIDQLTTVLNQLKQDPDSRRIIVSAWNVGELDQMALAPCHAFFQFYVADGKLSCQLYQRSCDVFLGLPFNIASYALLVHMMAQQCDLEVGDFVWTGGDTHLYSNHMEQTQLQLTREPRALPKLVIKRKPASLFDYRFEDFEIEGYDPHPAIKAPVAI.

DUMP is bound at residue Arg-21. His-51 is a binding site for (6R)-5,10-methylene-5,6,7,8-tetrahydrofolate. A dUMP-binding site is contributed by 126-127 (RR). Cys-146 acts as the Nucleophile in catalysis. Residues 166-169 (RSCD), Asn-177, and 207-209 (HLY) each bind dUMP. Asp-169 provides a ligand contact to (6R)-5,10-methylene-5,6,7,8-tetrahydrofolate. Residue Ala-263 coordinates (6R)-5,10-methylene-5,6,7,8-tetrahydrofolate.

The protein belongs to the thymidylate synthase family. Bacterial-type ThyA subfamily. In terms of assembly, homodimer.

The protein resides in the cytoplasm. It catalyses the reaction dUMP + (6R)-5,10-methylene-5,6,7,8-tetrahydrofolate = 7,8-dihydrofolate + dTMP. It participates in pyrimidine metabolism; dTTP biosynthesis. Catalyzes the reductive methylation of 2'-deoxyuridine-5'-monophosphate (dUMP) to 2'-deoxythymidine-5'-monophosphate (dTMP) while utilizing 5,10-methylenetetrahydrofolate (mTHF) as the methyl donor and reductant in the reaction, yielding dihydrofolate (DHF) as a by-product. This enzymatic reaction provides an intracellular de novo source of dTMP, an essential precursor for DNA biosynthesis. The sequence is that of Thymidylate synthase from Serratia proteamaculans (strain 568).